Reading from the N-terminus, the 372-residue chain is Forkhead box protein F1-B (372 aa).

A disordered region spans residues 1–51 (MTAEIQQPPSQPPAQSSPMSAATDKHGGQPSAMESASCATKTKKTNAGIRR). Positions 13–22 (PAQSSPMSAA) are enriched in low complexity. The segment at residues 54–148 (KPPYSYIALI…EEGSFRRRPR (95 aa)) is a DNA-binding region (fork-head).

At the late gastrula stage, expressed in the presumptive ventrolateral mesoderm. During neurulation and tailbud stages, expressed in the lateral plate mesoderm and in the neural crest-derived structures of the head and branchial arches. During tailbud stages, expressed in the pronephros and pronephros ducts and in cells that migrate from the dorsolateral plate to the ventral region of the embryo (with the notable exception of the heart). These cells may represent hematopoietic or endothelial progenitor cells.

Its subcellular location is the nucleus. Functionally, probable transcription factor. Required for smooth muscle (visceral mesoderm) differentiation during gut development. Also required for normal proliferation of the lateral plate mesoderm. Acts as a downstream mediator of bmp4-signaling. The protein is Forkhead box protein F1-B (foxf1-b) of Xenopus laevis (African clawed frog).